The following is a 195-amino-acid chain: Auxin-responsive protein IAA14 (195 aa).

2 disordered regions span residues 1–61 and 85–107; these read MAAE…SPAS and STAA…NKGG. Residues 10–14 carry the EAR-like (transcriptional repression) motif; sequence LRLGL. The PB1 domain occupies 108–191; it reads GLYVKVSMDG…SCKKLRIMRG (84 aa).

The protein belongs to the Aux/IAA family. As to quaternary structure, homodimers and heterodimers. As to expression, highly expressed in flowers. Expressed in etiolated seedlings.

It localises to the nucleus. Aux/IAA proteins are short-lived transcriptional factors that function as repressors of early auxin response genes at low auxin concentrations. In Oryza sativa subsp. japonica (Rice), this protein is Auxin-responsive protein IAA14 (IAA14).